We begin with the raw amino-acid sequence, 165 residues long: Serine/threonine-protein phosphatase 2A 56 kDa regulatory subunit epsilon isoform (165 aa).

Residues 1–41 (MSSAPTTPPSVDKVDGFSRKSVRKARQKRSQSSSQFRSQGK) form a disordered region. Ser-2 bears the N-acetylserine mark. Position 7 is a phosphothreonine (Thr-7). Basic residues predominate over residues 20–29 (KSVRKARQKR). Phosphoserine occurs at positions 30, 32, and 34. Over residues 30–41 (SQSSSQFRSQGK) the composition is skewed to low complexity.

This sequence belongs to the phosphatase 2A regulatory subunit B56 family. PP2A consists of a common heterodimeric core enzyme, composed of a 36 kDa catalytic subunit (subunit C) and a 65 kDa constant regulatory subunit (PR65 or subunit A), that associates with a variety of regulatory subunits. Proteins that associate with the core dimer include three families of regulatory subunits B (the R2/B/PR55/B55, R3/B''/PR72/PR130/PR59 and R5/B'/B56 families), the 48 kDa variable regulatory subunit, viral proteins, and cell signaling molecules. Interacts with SGO1. Found in a complex with at least ARL2, PPP2CB; PPP2R1A, PPP2R2A, PPP2R5E and TBCD. In terms of tissue distribution, highly expressed in testis, lung and brain.

It is found in the cytoplasm. The B regulatory subunit might modulate substrate selectivity and catalytic activity, and might also direct the localization of the catalytic enzyme to a particular subcellular compartment. The protein is Serine/threonine-protein phosphatase 2A 56 kDa regulatory subunit epsilon isoform (PPP2R5E) of Oryctolagus cuniculus (Rabbit).